A 311-amino-acid chain; its full sequence is Pyrimidine-specific ribonucleoside hydrolase RihA (311 aa).

His-240 is an active-site residue.

This sequence belongs to the IUNH family. RihA subfamily.

In terms of biological role, hydrolyzes with equal efficiency cytidine or uridine to ribose and cytosine or uracil, respectively. The chain is Pyrimidine-specific ribonucleoside hydrolase RihA from Escherichia coli (strain K12 / MC4100 / BW2952).